The following is a 470-amino-acid chain: uncharacterized protein (470 aa).

A coiled-coil region spans residues 418–453 (SECCEEQEEKEKKKEKEKEKKKEKDDDDDQQNNNNN). The segment at 423–470 (EQEEKEKKKEKEKEKKKEKDDDDDQQNNNNNDQNGLGLGLGLNFGLNL) is disordered. A compositionally biased stretch (basic and acidic residues) spans 426 to 441 (EKEKKKEKEKEKKKEK). Residues 448–457 (QNNNNNDQNG) are compositionally biased toward low complexity.

This is an uncharacterized protein from Acidianus bottle-shaped virus (isolate Italy/Pozzuoli) (ABV).